Reading from the N-terminus, the 151-residue chain is SsrA-binding protein (151 aa).

The interval K131 to K151 is disordered.

Belongs to the SmpB family.

The protein resides in the cytoplasm. Functionally, required for rescue of stalled ribosomes mediated by trans-translation. Binds to transfer-messenger RNA (tmRNA), required for stable association of tmRNA with ribosomes. tmRNA and SmpB together mimic tRNA shape, replacing the anticodon stem-loop with SmpB. tmRNA is encoded by the ssrA gene; the 2 termini fold to resemble tRNA(Ala) and it encodes a 'tag peptide', a short internal open reading frame. During trans-translation Ala-aminoacylated tmRNA acts like a tRNA, entering the A-site of stalled ribosomes, displacing the stalled mRNA. The ribosome then switches to translate the ORF on the tmRNA; the nascent peptide is terminated with the 'tag peptide' encoded by the tmRNA and targeted for degradation. The ribosome is freed to recommence translation, which seems to be the essential function of trans-translation. In Rickettsia bellii (strain OSU 85-389), this protein is SsrA-binding protein.